The chain runs to 518 residues: Glutamate--cysteine ligase (518 aa).

This sequence belongs to the glutamate--cysteine ligase type 1 family. Type 1 subfamily.

The enzyme catalyses L-cysteine + L-glutamate + ATP = gamma-L-glutamyl-L-cysteine + ADP + phosphate + H(+). It participates in sulfur metabolism; glutathione biosynthesis; glutathione from L-cysteine and L-glutamate: step 1/2. In Klebsiella pneumoniae (strain 342), this protein is Glutamate--cysteine ligase.